A 401-amino-acid chain; its full sequence is Glucose/mannose transporter GlcP (401 aa).

A run of 12 helical transmembrane segments spans residues 11–31 (AFFFTVGIIHISTGSLTPFLL), 43–63 (VIIFFQFTGFLSGVLIAPLMI), 78–98 (IMLVALSIFFLTKDWYYIIVM), 99–119 (AFLLGYGAGTLETTVGSFVIA), 132–152 (EVLFGLGALSFPLLINSFIDI), 156–176 (FLPYYCIFTFLFVLFVGWLIF), 212–232 (LGFFVFFAFLYAGIETNFANF), 247–267 (LISVSFFWVGIIIGRILIGFV), 278–298 (LFSCSCLIVLLIAFSYISNPI), 306–326 (LIGLSIAGIFPIALTLASIII), 336–356 (LFIASASFGGAIISFLIGWSL), and 360–380 (TILLTMGIFTTMAVILVGISV).

Belongs to the major facilitator superfamily.

It is found in the cell membrane. Functionally, can transport glucose, mannose, 2-deoxyglucose and methyl alpha-glucoside, but not galactose. The chain is Glucose/mannose transporter GlcP (glcP) from Bacillus subtilis (strain 168).